A 355-amino-acid polypeptide reads, in one-letter code: Peptide chain release factor 1 (355 aa).

N5-methylglutamine is present on glutamine 233.

It belongs to the prokaryotic/mitochondrial release factor family. Post-translationally, methylated by PrmC. Methylation increases the termination efficiency of RF1.

The protein localises to the cytoplasm. Its function is as follows. Peptide chain release factor 1 directs the termination of translation in response to the peptide chain termination codons UAG and UAA. This Dehalococcoides mccartyi (strain ATCC BAA-2100 / JCM 16839 / KCTC 5957 / BAV1) protein is Peptide chain release factor 1.